The sequence spans 39 residues: Cytochrome b6-f complex subunit 5 (39 aa).

A helical membrane pass occupies residues 5–25 (LLSGIVLGLVPVTILGLFVTA).

It belongs to the PetG family. The 4 large subunits of the cytochrome b6-f complex are cytochrome b6, subunit IV (17 kDa polypeptide, PetD), cytochrome f and the Rieske protein, while the 4 small subunits are PetG, PetL, PetM and PetN. The complex functions as a dimer.

Its subcellular location is the plastid. It localises to the chloroplast thylakoid membrane. Component of the cytochrome b6-f complex, which mediates electron transfer between photosystem II (PSII) and photosystem I (PSI), cyclic electron flow around PSI, and state transitions. PetG is required for either the stability or assembly of the cytochrome b6-f complex. The protein is Cytochrome b6-f complex subunit 5 of Pleurastrum terricola (Filamentous green alga).